The following is a 276-amino-acid chain: Zinc transporter ZTP29 (276 aa).

At 1-6 (MDSQML) the chain is on the cytoplasmic side. Residues 7–27 (VALGLSLVGGLSTSLGALFVV) traverse the membrane as a helical segment. Residues 28–35 (LSETPNMK) lie on the Lumenal side of the membrane. Residues 36–56 (MLGLLQGFASGLMLSISFLDL) form a helical membrane-spanning segment. Residues 57 to 63 (AHNAINS) lie on the Cytoplasmic side of the membrane. Residues 64–84 (IGFFKANLWFFGGVIFFACIT) traverse the membrane as a helical segment. Residues 85–123 (KFIPEPTLGPSTDGKRRKKNGDEGGKDMMKKHRKQVLYS) lie on the Lumenal side of the membrane. The helical transmembrane segment at 124–144 (GLITAIGISLHNFPEGMAVFL) threads the bilayer. The Cytoplasmic portion of the chain corresponds to 145-156 (GSIKGMRVGVNL). Residues 157-177 (ALAIALHNIPEGVAVALPIYF) traverse the membrane as a helical segment. The Lumenal portion of the chain corresponds to 178–187 (ATESKWQAFK). The helical transmembrane segment at 188-208 (LATLSGLAEPLGVIIVAYLFP) threads the bilayer. Residues 209 to 219 (RSLSPEILEGL) are Cytoplasmic-facing. Residues 220 to 240 (LGAVGGIMAFLTLHEMLPLAF) traverse the membrane as a helical segment. Residues 241-250 (DYAGQKQAVK) are Lumenal-facing. Residues 251-271 (AVFFGMACMSASLYFLELSLP) traverse the membrane as a helical segment. Over 272–276 (ETMSL) the chain is Cytoplasmic.

The protein belongs to the ZIP transporter (TC 2.A.5) family. ZupT subfamily. In terms of tissue distribution, expressed in hypocotyls, cotyledons, leaves and anthers.

It localises to the endoplasmic reticulum membrane. Zinc transporter involved response to salt stress. May act through the regulation of zinc levels required to induce the unfolded protein response (UPR) pathway. The chain is Zinc transporter ZTP29 (ZTP29) from Arabidopsis thaliana (Mouse-ear cress).